Reading from the N-terminus, the 368-residue chain is DNA replication and repair protein RecF (368 aa).

Residue 30-37 (GNNAQGKT) coordinates ATP.

This sequence belongs to the RecF family.

It is found in the cytoplasm. The RecF protein is involved in DNA metabolism; it is required for DNA replication and normal SOS inducibility. RecF binds preferentially to single-stranded, linear DNA. It also seems to bind ATP. The chain is DNA replication and repair protein RecF from Streptococcus pyogenes serotype M18 (strain MGAS8232).